We begin with the raw amino-acid sequence, 86 residues long: Progonadoliberin IIA (86 aa).

Residues Met-1–Ser-24 form the signal peptide. Gln-25 is subject to Pyrrolidone carboxylic acid. A Glycine amide modification is found at Gly-34.

The protein belongs to the GnRH family. Olfactory bulbs, hypothalamus and telencephalon, midbrain and posterior brain areas.

The protein localises to the secreted. Functionally, stimulates the secretion of gonadotropins. This Carassius auratus (Goldfish) protein is Progonadoliberin IIA (gnrh2a).